The primary structure comprises 46 residues: Large ribosomal subunit protein bL36 (46 aa).

The protein belongs to the bacterial ribosomal protein bL36 family.

This Salmonella agona (strain SL483) protein is Large ribosomal subunit protein bL36.